We begin with the raw amino-acid sequence, 1093 residues long: Synaptopodin-2 (1093 aa).

Positions 1–180 (MGTGDFICIS…PDSQRGRVAE (180 aa)) are interaction with VPS18. A PDZ domain is found at 6–88 (FICISMTGGA…SLQMLIKRPS (83 aa)). Disordered regions lie at residues 144-174 (ENQR…PDSQ) and 211-233 (ASGP…DPNL). A compositionally biased stretch (basic and acidic residues) spans 222 to 233 (EKSKSPDPDPNL). A phosphoserine mark is found at S274, S310, S329, and S330. Positions 329–369 (SSEGTEQGEDPRSEKDHSRPHKHRARHARLRRSESLSEKQV) are disordered. Phosphothreonine is present on T333. The segment covering 346–358 (SRPHKHRARHARL) has biased composition (basic residues). Over residues 359-369 (RRSESLSEKQV) the composition is skewed to basic and acidic residues. Residues 398–406 (KKRRRRARK) carry the Nuclear localization signal motif. Interaction with ACTN2 regions lie at residues 481–663 (MEML…FYDS), 664–924 (SERI…PPVA), and 901–1093 (QSPT…VVEE). Disordered stretches follow at residues 507–803 (AQKE…GTVV) and 834–870 (AVAS…GMSG). F-actin binding stretches follow at residues 534-663 (TSYQ…FYDS) and 664-803 (SERI…GTVV). Residues S548, S549, and S551 each carry the phosphoserine modification. Polar residues-rich tracts occupy residues 565–579 (PQQN…TANI) and 595–611 (SVNQ…NMTS). Phosphoserine is present on S604. The segment at 607-811 (RNMTSPIADF…VVSSIKIAQP (205 aa)) is interaction with YWHAB. T610 bears the Phosphothreonine mark. The residue at position 611 (S611) is a Phosphoserine. The tract at residues 615 to 626 (DFPAPPPYSAVT) is interaction with BAG3. Pro residues-rich tracts occupy residues 617 to 630 (PAPP…PPPD) and 644 to 655 (AQPPPWPQPAPW). A PPPY motif motif is present at residues 619-622 (PPPY). A Phosphotyrosine modification is found at Y622. At T626 the chain carries Phosphothreonine. Basic and acidic residues predominate over residues 663–674 (SSERIASRDERI). An F-actin bundling activity region spans residues 664 to 916 (SERIASRDER…LPASWKYSSN (253 aa)). S705 and S729 each carry phosphoserine. The segment at 751 to 900 (AKQKTPPPVA…DTVQAHAARA (150 aa)) is actin binding. Phosphothreonine is present on residues T755 and T774. Positions 762 to 784 (KPAVKSSSSQPVTPVSPVWSPGV) are enriched in low complexity. S777 and S781 each carry phosphoserine. 2 stretches are compositionally biased toward polar residues: residues 793–803 (PTSNPSKGTVV) and 835–853 (VASQ…TVNA). The interval 810–1093 (QPSYPPARPA…QVWKPSVVEE (284 aa)) is interaction with FLNC. Phosphoserine occurs at positions 902, 906, and 910. A disordered region spans residues 937–956 (ALKSQPSAAQPSKMGKKKGK). The tract at residues 1000 to 1019 (LAMKQALPPRPVNAASPTNV) is interaction with ZYX. At S1015 the chain carries Phosphoserine. A compositionally biased stretch (low complexity) spans 1041–1050 (SSPVSASPVP). Residues 1041-1064 (SSPVSASPVPVGIPTSPKQESASS) are disordered. Position 1056 is a phosphoserine (S1056).

It belongs to the synaptopodin family. As to quaternary structure, may self-associate in muscle cells under oxidative stress. Binds F-actin. Interacts with ACTN2; ACTN2 is proposed to anchor SYOP2 at Z lines in mature myocytes. Interacts with AKAP6, PPP3CA and CAMK2A. Interacts (phosphorylated form) with YWHAB; YWHAB competes with ACTN2 for interaction with SYNPO2. Interacts with KPNA2; mediating nuclear import of SYNOP2; dependent on interaction with YWHAB. Interacts with IPO13; may be implicated in SYNOP2 nuclear import. Interacts with ZYX, FLNC, ILK. Interacts with BAG3 (via WW 1 domain). May associate with the CASA complex consisting of HSPA8, HSPB8 and BAG3. Interacts with VPS18. Phosphorylated by PKA, and by CaMK2 at multiple sites. Dephosphorylated by calcineurin; abrogating interaction with YWHAB and impairing nuclear import. Phosphorylated by ILK. As to expression, expressed in heart muscle. Isoform 5 is specifically expressed in skeletal muscle.

It localises to the nucleus. The protein localises to the cytoplasm. Its subcellular location is the cytoskeleton. The protein resides in the myofibril. It is found in the sarcomere. It localises to the z line. The protein localises to the cell junction. Its subcellular location is the focal adhesion. In terms of biological role, has an actin-binding and actin-bundling activity. Can induce the formation of F-actin networks in an isoform-specific manner. At the sarcomeric Z lines is proposed to act as adapter protein that links nascent myofibers to the sarcolemma via ZYX and may play a role in early assembly and stabilization of the Z lines. Involved in autophagosome formation. May play a role in chaperone-assisted selective autophagy (CASA) involved in Z lines maintenance in striated muscle under mechanical tension; may link the client-processing CASA chaperone machinery to a membrane-tethering and fusion complex providing autophagosome membranes. Involved in regulation of cell migration. May be a tumor suppressor. Functionally, involved in regulation of cell migration. Can induce formation of thick, irregular actin bundles in the cell body. Involved in regulation of cell migration. Can induce long, well-organized actin bundles frequently orientated in parallel along the long axis of the cell showing characteristics of contractile ventral stress fibers. Its function is as follows. Involved in regulation of cell migration. Can induce an amorphous actin meshwork throughout the cell body containing a mixture of long and short, randomly organized thick and thin actin bundles. In terms of biological role, can induce long, well-organized actin bundles frequently orientated in parallel along the long axis of the cell showing characteristics of contractile ventral stress fibers. Functionally, involved in regulation of cell migration in part dependent on the Rho-ROCK cascade; can promote formation of nascent focal adhesions, actin bundles at the leading cell edge and lamellipodia. Can induce formation of thick, irregular actin bundles in the cell body; the induced actin network is associated with enhanced cell migration in vitro. In Homo sapiens (Human), this protein is Synaptopodin-2 (SYNPO2).